The chain runs to 870 residues: Aldehyde-alcohol dehydrogenase 2 (870 aa).

Cys-252 is a catalytic residue. Gly-431–Gly-436 is an NAD(+) binding site.

The protein in the N-terminal section; belongs to the aldehyde dehydrogenase family. This sequence in the C-terminal section; belongs to the iron-containing alcohol dehydrogenase family. In terms of assembly, seems to form a rod shaped homomer composed of at least 20 identical subunits. Zn(2+) serves as cofactor. Fe(2+) is required as a cofactor.

It catalyses the reaction a primary alcohol + NAD(+) = an aldehyde + NADH + H(+). The catalysed reaction is a secondary alcohol + NAD(+) = a ketone + NADH + H(+). The enzyme catalyses acetaldehyde + NAD(+) + CoA = acetyl-CoA + NADH + H(+). Functionally, this enzyme has two NAD(+)-dependent activities: ADH and ACDH. May be a critical enzyme in the fermentative pathway. This Entamoeba histolytica (strain ATCC 30459 / HM-1:IMSS / ABRM) protein is Aldehyde-alcohol dehydrogenase 2 (ADH2).